The following is a 782-amino-acid chain: Acetazolamide conferring resistance protein zam (782 aa).

An RNB domain is found at 270-579 (EVALSLESQA…QRLLKLVLTE (310 aa)). The S1 motif domain maps to 655–736 (GEIFRGLITG…YRQQIDLGAV (82 aa)). Residues 737–782 (NNAPKDSANMDFDDDDEDGDEREEQDTMDWDAMEDGDDDEGGAVIF) form a disordered region. Over residues 747–782 (DFDDDDEDGDEREEQDTMDWDAMEDGDDDEGGAVIF) the composition is skewed to acidic residues.

It belongs to the RNR ribonuclease family.

Not known; control resistance to the carbonic anhydrase inhibitor acetazolamide. This is Acetazolamide conferring resistance protein zam (zam) from Synechocystis sp. (strain ATCC 27184 / PCC 6803 / Kazusa).